We begin with the raw amino-acid sequence, 218 residues long: Elongation factor Ts (218 aa).

The involved in Mg(2+) ion dislocation from EF-Tu stretch occupies residues 82-85 (TDFV).

It belongs to the EF-Ts family.

The protein localises to the cytoplasm. Associates with the EF-Tu.GDP complex and induces the exchange of GDP to GTP. It remains bound to the aminoacyl-tRNA.EF-Tu.GTP complex up to the GTP hydrolysis stage on the ribosome. The protein is Elongation factor Ts of Prochlorococcus marinus (strain NATL1A).